A 370-amino-acid chain; its full sequence is Glutamate 5-kinase (370 aa).

Residue lysine 11 coordinates ATP. Substrate is bound by residues serine 52, aspartate 139, and asparagine 151. Residues 171–172 and 213–219 contribute to the ATP site; these read TD and TGGMATK. Residues 278–356 enclose the PUA domain; it reads TGKLLLDAGA…DQIVQILGYE (79 aa).

Belongs to the glutamate 5-kinase family.

It is found in the cytoplasm. The catalysed reaction is L-glutamate + ATP = L-glutamyl 5-phosphate + ADP. It participates in amino-acid biosynthesis; L-proline biosynthesis; L-glutamate 5-semialdehyde from L-glutamate: step 1/2. Catalyzes the transfer of a phosphate group to glutamate to form L-glutamate 5-phosphate. The protein is Glutamate 5-kinase of Synechococcus sp. (strain ATCC 27144 / PCC 6301 / SAUG 1402/1) (Anacystis nidulans).